A 597-amino-acid polypeptide reads, in one-letter code: Elongation factor 4 (597 aa).

The tr-type G domain maps to 2–184 (QNIRNFSIIA…DIVKKIPAPE (183 aa)). GTP is bound by residues 14-19 (DHGKST) and 131-134 (NKID).

This sequence belongs to the TRAFAC class translation factor GTPase superfamily. Classic translation factor GTPase family. LepA subfamily.

The protein resides in the cell inner membrane. It carries out the reaction GTP + H2O = GDP + phosphate + H(+). Its function is as follows. Required for accurate and efficient protein synthesis under certain stress conditions. May act as a fidelity factor of the translation reaction, by catalyzing a one-codon backward translocation of tRNAs on improperly translocated ribosomes. Back-translocation proceeds from a post-translocation (POST) complex to a pre-translocation (PRE) complex, thus giving elongation factor G a second chance to translocate the tRNAs correctly. Binds to ribosomes in a GTP-dependent manner. The sequence is that of Elongation factor 4 from Haemophilus ducreyi (strain 35000HP / ATCC 700724).